The following is a 232-amino-acid chain: MSAPSVITIDGPAGAGKSTLGELLARRLGYLFFDTGVMYRALAWAVLHGAIDPEDGEAVTALARDLDIQVLPPGDAMDGRLYTVLVNGVDVTWELRHPDVERIVSITARHPAVRTVMRERQRAIGSRGRVVMVGRDIGSIVMPDAPLKIYLDASIDERARRRTDEILRRGGDADLQRIRNDMIRRDSLDRYVSAPAADACTIISDGLSPEQVVALVIARIADRCDDSQEARA.

11-19 (GPAGAGKST) is an ATP binding site.

Belongs to the cytidylate kinase family. Type 1 subfamily.

The protein localises to the cytoplasm. The catalysed reaction is CMP + ATP = CDP + ADP. The enzyme catalyses dCMP + ATP = dCDP + ADP. The polypeptide is Cytidylate kinase (Roseiflexus castenholzii (strain DSM 13941 / HLO8)).